Reading from the N-terminus, the 107-residue chain is Nucleoid-associated protein Mmar10_0436 (107 aa).

This sequence belongs to the YbaB/EbfC family. In terms of assembly, homodimer.

It is found in the cytoplasm. The protein resides in the nucleoid. Its function is as follows. Binds to DNA and alters its conformation. May be involved in regulation of gene expression, nucleoid organization and DNA protection. The chain is Nucleoid-associated protein Mmar10_0436 from Maricaulis maris (strain MCS10) (Caulobacter maris).